Consider the following 447-residue polypeptide: Cysteine--tRNA ligase (447 aa).

Zn(2+) is bound at residue Cys-28. A 'HIGH' region motif is present at residues 30 to 40 (PTVYNYIHVGN). Zn(2+) contacts are provided by Cys-211, His-236, and Glu-240. The 'KMSKS' region signature appears at 268–272 (KMSKS). Lys-271 provides a ligand contact to ATP.

Belongs to the class-I aminoacyl-tRNA synthetase family. As to quaternary structure, monomer. Zn(2+) is required as a cofactor.

Its subcellular location is the cytoplasm. The enzyme catalyses tRNA(Cys) + L-cysteine + ATP = L-cysteinyl-tRNA(Cys) + AMP + diphosphate. The protein is Cysteine--tRNA ligase of Streptococcus pneumoniae serotype 4 (strain ATCC BAA-334 / TIGR4).